A 225-amino-acid chain; its full sequence is Phosphoribosyltransferase domain-containing protein 1 (225 aa).

An N-acetylalanine modification is found at A2. Mg(2+) contacts are provided by E141 and D142. GMP is bound by residues 141 to 149 (EDVVGTGRT), K173, 194 to 195 (FV), and D201. D201 contributes to the Mg(2+) binding site.

This sequence belongs to the purine/pyrimidine phosphoribosyltransferase family. Homodimer.

Has low, barely detectable phosphoribosyltransferase activity (in vitro). Binds GMP, IMP and alpha-D-5-phosphoribosyl 1-pyrophosphate (PRPP). Is not expected to contribute to purine metabolism or GMP salvage. The polypeptide is Phosphoribosyltransferase domain-containing protein 1 (PRTFDC1) (Homo sapiens (Human)).